The following is a 219-amino-acid chain: Protein-L-isoaspartate O-methyltransferase 2 (219 aa).

Residue Ser-66 is part of the active site.

It belongs to the methyltransferase superfamily. L-isoaspartyl/D-aspartyl protein methyltransferase family.

The protein localises to the cytoplasm. The enzyme catalyses [protein]-L-isoaspartate + S-adenosyl-L-methionine = [protein]-L-isoaspartate alpha-methyl ester + S-adenosyl-L-homocysteine. Catalyzes the methyl esterification of L-isoaspartyl residues in peptides and proteins that result from spontaneous decomposition of normal L-aspartyl and L-asparaginyl residues. It plays a role in the repair and/or degradation of damaged proteins. This is Protein-L-isoaspartate O-methyltransferase 2 from Marinobacter nauticus (strain ATCC 700491 / DSM 11845 / VT8) (Marinobacter aquaeolei).